We begin with the raw amino-acid sequence, 92 residues long: Small ribosomal subunit protein uS19c (92 aa).

It belongs to the universal ribosomal protein uS19 family.

The protein localises to the plastid. The protein resides in the chloroplast. In terms of biological role, protein S19 forms a complex with S13 that binds strongly to the 16S ribosomal RNA. In Vitis vinifera (Grape), this protein is Small ribosomal subunit protein uS19c.